Consider the following 36-residue polypeptide: Avenin-A (36 aa).

This sequence belongs to the gliadin/glutenin family. As to quaternary structure, monomer.

It is found in the vacuole. The protein resides in the aleurone grain. Seed storage protein. Serves as a source of nitrogen, carbon, and sulfur for the young developing seedling. In Avena sativa (Oat), this protein is Avenin-A.